Reading from the N-terminus, the 655-residue chain is Cyclomaltodextrin glucanotransferase (655 aa).

Residues Met1–Ala30 form the signal peptide. Ca(2+)-binding residues include Asp55, Asn60, Asn61, Gly79, and Asp81. Tyr123–Trp124 serves as a coordination point for substrate. Asn164 contributes to the Ca(2+) binding site. Substrate-binding positions include His165 and Asn217 to Asn220. Asp223 contacts Ca(2+). Arg251 is a substrate binding site. Asp253 serves as the catalytic Nucleophile. Lys256–His257 provides a ligand contact to substrate. Residue His257 coordinates Ca(2+). Catalysis depends on Glu287, which acts as the Proton donor. Residues His362, Asp436, and Arg440 each contribute to the substrate site. Residues Ala554–Phe655 form the CBM20 domain. Positions Thr630–Phe655 are disordered.

This sequence belongs to the glycosyl hydrolase 13 family. As to quaternary structure, monomer. Ca(2+) is required as a cofactor.

It catalyses the reaction Cyclizes part of a (1-&gt;4)-alpha-D-glucan chain by formation of a (1-&gt;4)-alpha-D-glucosidic bond.. This Klebsiella oxytoca protein is Cyclomaltodextrin glucanotransferase (cgt).